Here is a 127-residue protein sequence, read N- to C-terminus: Fluoride-specific ion channel FluC (127 aa).

A run of 4 helical transmembrane segments spans residues 7–27 (LLVALGGALGSLLRYGLGAWV), 31–51 (LGAGFPWSTLFVNALGSFLIG), 68–88 (LFLAVGVLGGFTTFSSLSYET), and 97–117 (VGKALLYAFGSLFLGLLLAFL). Positions 76 and 79 each coordinate Na(+).

This sequence belongs to the fluoride channel Fluc/FEX (TC 1.A.43) family.

The protein localises to the cell inner membrane. It catalyses the reaction fluoride(in) = fluoride(out). With respect to regulation, na(+) is not transported, but it plays an essential structural role and its presence is essential for fluoride channel function. Its function is as follows. Fluoride-specific ion channel. Important for reducing fluoride concentration in the cell, thus reducing its toxicity. The sequence is that of Fluoride-specific ion channel FluC from Thermus thermophilus (strain ATCC BAA-163 / DSM 7039 / HB27).